A 675-amino-acid chain; its full sequence is Protein REPRESSOR OF VERNALIZATION 1 (675 aa).

The disordered stretch occupies residues 1–143 (MGRRRRFTQQ…DPVKVTGKGK (143 aa)). The span at 22-31 (AEPPKTAKPA) shows a compositional bias: low complexity. The segment covering 48–70 (EEEDEDEEDELELEDEEDDEKDL) has biased composition (acidic residues). Residues 71–86 (EEMRRNEEEERREETR) show a composition bias toward basic and acidic residues. Residues 73–80 (MRRNEEEE) carry the Nuclear localization signal motif. A compositionally biased stretch (basic residues) spans 87–96 (TRRRRGRKPK). Residues 113–127 (SDEEEEEEVREEDST) show a composition bias toward acidic residues. One can recognise a BAH domain in the interval 157-275 (NTFELEDPVL…TVAKKLWNLT (119 aa)). 3 disordered regions span residues 300 to 349 (ELPD…KPET), 493 to 512 (GLTP…LQMT), and 587 to 675 (LASP…ADHE). Basic and acidic residues-rich tracts occupy residues 333–346 (VSRD…HFVK), 499–512 (KTSE…LQMT), and 613–627 (KLEK…KPEE). Residues 372-518 (YRDKWLDKLL…LQMTDARCER (147 aa)) enclose the TFIIS central domain.

Expressed constitutively.

Its subcellular location is the nucleus. Its function is as follows. Component of a grass-specific mechanism of vernalization, a process by which prolonged cold exposure provides competence to flower in daylengths longer than 12 hours. Negative regulator of flowering required for vernalization establishment by repressing VRN1 before vernalization and in the fall season. The chain is Protein REPRESSOR OF VERNALIZATION 1 from Brachypodium distachyon (Purple false brome).